A 100-amino-acid chain; its full sequence is Nucleoid-associated protein MYPU_0500 (100 aa).

Belongs to the YbaB/EbfC family. In terms of assembly, homodimer.

Its subcellular location is the cytoplasm. It localises to the nucleoid. Its function is as follows. Binds to DNA and alters its conformation. May be involved in regulation of gene expression, nucleoid organization and DNA protection. This is Nucleoid-associated protein MYPU_0500 from Mycoplasmopsis pulmonis (strain UAB CTIP) (Mycoplasma pulmonis).